The primary structure comprises 805 residues: Probable phosphoketolase (805 aa).

This sequence belongs to the XFP family. Requires thiamine diphosphate as cofactor.

In Synechocystis sp. (strain ATCC 27184 / PCC 6803 / Kazusa), this protein is Probable phosphoketolase.